Here is a 171-residue protein sequence, read N- to C-terminus: S-ribosylhomocysteine lyase (171 aa).

Fe cation is bound by residues histidine 54, histidine 58, and cysteine 128.

This sequence belongs to the LuxS family. In terms of assembly, homodimer. It depends on Fe cation as a cofactor.

It carries out the reaction S-(5-deoxy-D-ribos-5-yl)-L-homocysteine = (S)-4,5-dihydroxypentane-2,3-dione + L-homocysteine. Functionally, involved in the synthesis of autoinducer 2 (AI-2) which is secreted by bacteria and is used to communicate both the cell density and the metabolic potential of the environment. The regulation of gene expression in response to changes in cell density is called quorum sensing. Catalyzes the transformation of S-ribosylhomocysteine (RHC) to homocysteine (HC) and 4,5-dihydroxy-2,3-pentadione (DPD). The polypeptide is S-ribosylhomocysteine lyase (Escherichia coli O81 (strain ED1a)).